Reading from the N-terminus, the 233-residue chain is Modulator of macroautophagy TMEM150B (233 aa).

Over 1-7 (MWGYLSL) the chain is Cytoplasmic. A helical membrane pass occupies residues 8 to 28 (MPVFLAVWAISGVWIVFAIAV). Over 29 to 51 (TNRTVDLSKGFPYISICGSFPPQ) the chain is Extracellular. N-linked (GlcNAc...) asparagine glycosylation is present at Asn30. A helical transmembrane segment spans residues 52–72 (SCIFSQVLNMGAALAAWICIV). The Cytoplasmic portion of the chain corresponds to 73–84 (RYHQLRDWGVRR). A helical membrane pass occupies residues 85–105 (WPNQLILWTGLLCALGTSVVG). Over 106–116 (NFQEKNQRPTH) the chain is Extracellular. A helical transmembrane segment spans residues 117 to 137 (LAGAFLAFILGNVYFWLQLLL). The Cytoplasmic portion of the chain corresponds to 138 to 155 (WRLKRLPQPGAAWIGPLR). The chain crosses the membrane as a helical span at residues 156 to 176 (LGLCSVCTILIVAMIVLHACS). The Extracellular segment spans residues 177-185 (LRSVSAACE). A helical membrane pass occupies residues 186-206 (WVVAMLLFALFGLLAVDFSAL). Topologically, residues 207 to 233 (ESCTLCVQPWPSLSPPPASPISLPVQL) are cytoplasmic.

The protein belongs to the DRAM/TMEM150 family. In terms of tissue distribution, highly expressed in the colon and lung with comparatively high levels also detectable in the lymph nodes, placenta, duodenum, peripheral blood mononuclear cells and spleen.

It is found in the cell membrane. The protein resides in the endosome membrane. Its subcellular location is the cytoplasmic vesicle. The protein localises to the autophagosome membrane. Its function is as follows. Modulator of macroautophagy that causes accumulation of autophagosomes under basal conditions and enhances autophagic flux. Represses cell death and promotes long-term clonogenic survival of cells grown in the absence of glucose in a macroautophagy-independent manner. May have some role in extracellular matrix engulfment or growth factor receptor recycling, both of which can modulate cell survival. This Homo sapiens (Human) protein is Modulator of macroautophagy TMEM150B.